A 465-amino-acid polypeptide reads, in one-letter code: Neutrophil collagenase (465 aa).

A signal peptide spans 1–20 (MFRLKTLPLLIFLHTQLANA). The propeptide at 21–100 (FPVPEHLEEK…CGVPDSGDFL (80 aa)) is activation peptide. N-linked (GlcNAc...) asparagine glycosylation is present at asparagine 55. The Cysteine switch motif lies at 89-96 (PRCGVPDS). Cysteine 91 serves as a coordination point for Zn(2+). N-linked (GlcNAc...) asparagine glycosylation occurs at asparagine 112. Aspartate 157 is a Ca(2+) binding site. 2 residues coordinate Zn(2+): histidine 167 and aspartate 169. Positions 174, 175, 177, and 179 each coordinate Ca(2+). Histidine 182 lines the Zn(2+) pocket. Ca(2+) contacts are provided by glycine 189, glycine 191, and aspartate 193. Histidine 195 serves as a coordination point for Zn(2+). Ca(2+) is bound by residues aspartate 197 and glutamate 200. Residue histidine 217 coordinates Zn(2+). The active site involves glutamate 218. Zn(2+) is bound by residues histidine 221 and histidine 227. Hemopexin repeat units lie at residues 276–325 (PKAC…WPFL), 326–372 (PNGL…GFPR), 374–420 (VQAI…FPGV), and 421–464 (NCRV…WLNC). Residues cysteine 279 and cysteine 464 are joined by a disulfide bond. Position 286 (aspartate 286) interacts with Ca(2+). Ca(2+) is bound by residues aspartate 378 and aspartate 425.

The protein belongs to the peptidase M10A family. Requires Ca(2+) as cofactor. Zn(2+) is required as a cofactor. Neutrophils. Expressed in uterus. Low levels in kidney and muscle.

The protein localises to the cytoplasmic granule. It localises to the secreted. Its subcellular location is the extracellular space. The protein resides in the extracellular matrix. The enzyme catalyses Cleavage of interstitial collagens in the triple helical domain. Unlike EC 3.4.24.7, this enzyme cleaves type III collagen more slowly than type I.. Its activity is regulated as follows. Cannot be activated without removal of the activation peptide. Activated by matrilysin. Its function is as follows. Can degrade fibrillar type I, II, and III collagens. May play a role in the degradation of collagen fibers during uterine involution. This is Neutrophil collagenase (Mmp8) from Mus musculus (Mouse).